The chain runs to 149 residues: Large ribosomal subunit protein bL9 (149 aa).

The protein belongs to the bacterial ribosomal protein bL9 family.

Functionally, binds to the 23S rRNA. The chain is Large ribosomal subunit protein bL9 from Endomicrobium trichonymphae.